The chain runs to 705 residues: Ribosomal RNA large subunit methyltransferase K/L (705 aa).

One can recognise a THUMP domain in the interval 43–154 (VVYRCCLWSR…GEKGILGFDL (112 aa)).

Belongs to the methyltransferase superfamily. RlmKL family.

It is found in the cytoplasm. It carries out the reaction guanosine(2445) in 23S rRNA + S-adenosyl-L-methionine = N(2)-methylguanosine(2445) in 23S rRNA + S-adenosyl-L-homocysteine + H(+). The enzyme catalyses guanosine(2069) in 23S rRNA + S-adenosyl-L-methionine = N(2)-methylguanosine(2069) in 23S rRNA + S-adenosyl-L-homocysteine + H(+). Its function is as follows. Specifically methylates the guanine in position 2445 (m2G2445) and the guanine in position 2069 (m7G2069) of 23S rRNA. This is Ribosomal RNA large subunit methyltransferase K/L from Aliivibrio fischeri (strain ATCC 700601 / ES114) (Vibrio fischeri).